A 289-amino-acid chain; its full sequence is uncharacterized protein (289 aa).

Transmembrane regions (helical) follow at residues 4 to 24 (NLLA…GTVV), 44 to 64 (LNAL…LAYF), 68 to 88 (VALG…SLMF), 106 to 126 (IFWA…GRPL), 138 to 158 (IPVL…AEYV), 166 to 186 (ILGL…KAAV), 196 to 216 (GLIL…GTIV), 230 to 250 (LPAM…LVLG), and 258 to 278 (WEWI…IALS).

The protein localises to the cell membrane. This is an uncharacterized protein from Corynebacterium glutamicum (strain ATCC 13032 / DSM 20300 / JCM 1318 / BCRC 11384 / CCUG 27702 / LMG 3730 / NBRC 12168 / NCIMB 10025 / NRRL B-2784 / 534).